The sequence spans 230 residues: Ribonuclease 3 (230 aa).

The RNase III domain occupies 1-134 (MKQLEELLST…FLGALLLDKG (134 aa)). Position 47 (Glu47) interacts with Mg(2+). The active site involves Asp51. The Mg(2+) site is built by Asp120 and Glu123. Glu123 is an active-site residue. Positions 160–229 (DYKTCLQEFL…AKNALAQLSE (70 aa)) constitute a DRBM domain.

The protein belongs to the ribonuclease III family. As to quaternary structure, homodimer. Mg(2+) is required as a cofactor.

The protein resides in the cytoplasm. It carries out the reaction Endonucleolytic cleavage to 5'-phosphomonoester.. In terms of biological role, digests double-stranded RNA. Involved in the processing of primary rRNA transcript to yield the immediate precursors to the large and small rRNAs (23S and 16S). Processes some mRNAs, and tRNAs when they are encoded in the rRNA operon. Processes pre-crRNA and tracrRNA of type II CRISPR loci if present in the organism. The sequence is that of Ribonuclease 3 from Streptococcus pyogenes serotype M28 (strain MGAS6180).